We begin with the raw amino-acid sequence, 261 residues long: Class II histocompatibility antigen, M beta 1 chain (261 aa).

Residues Met-1–Ala-18 form the signal peptide. The segment at Gly-19–Thr-112 is beta-1. Residues Gly-19–Lys-218 are Lumenal-facing. 3 disulfide bridges follow: Cys-29–Cys-97, Cys-43–Cys-53, and Cys-135–Cys-192. Asn-75 carries N-linked (GlcNAc...) asparagine glycosylation. The tract at residues Arg-113 to Trp-207 is beta-2. The Ig-like C1-type domain maps to Pro-114–Arg-204. Residues Thr-208 to Lys-218 form a connecting peptide region. Residues Val-219–Arg-239 form a helical membrane-spanning segment. Topologically, residues Trp-240–His-261 are cytoplasmic. A YXXZ motif motif is present at residues Tyr-248–Leu-251.

The protein belongs to the MHC class II family. Heterodimer of an alpha chain (DMA) and a beta chain (DMB). Interacts with MHCII; this interaction mediates rapid selection of high-affinity peptides.

The protein resides in the late endosome membrane. Its subcellular location is the lysosome membrane. Plays a critical role in catalyzing the release of class II-associated invariant chain peptide (CLIP) from newly synthesized MHC class II molecules and freeing the peptide binding site for acquisition of antigenic peptides. The chain is Class II histocompatibility antigen, M beta 1 chain (H2-DMb1) from Mus musculus (Mouse).